We begin with the raw amino-acid sequence, 376 residues long: 1-acyl-sn-glycerol-3-phosphate acyltransferase 3 (376 aa).

The next 2 helical transmembrane spans lie at 14 to 34 (VLFL…FIIV) and 49 to 69 (VAEL…CIKI). Positions 92–97 (HRSDID) match the HXXXXD motif motif. The next 3 helical transmembrane spans lie at 98-118 (WLIG…LAIM), 306-326 (LIVV…LLQW), and 335-355 (IILL…ILIQ).

The protein belongs to the 1-acyl-sn-glycerol-3-phosphate acyltransferase family. In terms of tissue distribution, predominantly expressed in pollen.

It is found in the membrane. The enzyme catalyses a 1-acyl-sn-glycero-3-phosphate + an acyl-CoA = a 1,2-diacyl-sn-glycero-3-phosphate + CoA. The protein operates within phospholipid metabolism; CDP-diacylglycerol biosynthesis; CDP-diacylglycerol from sn-glycerol 3-phosphate: step 2/3. Functionally, converts lysophosphatidic acid (LPA) into phosphatidic acid by incorporating acyl moiety at the 2 position. Has preference for C-18-CoA substrates compared to C-16-CoA substrates. This is 1-acyl-sn-glycerol-3-phosphate acyltransferase 3 (LPAT3) from Arabidopsis thaliana (Mouse-ear cress).